The chain runs to 39 residues: Photosystem II reaction center protein J (39 aa).

Residues 9–29 (LWLVGLVGGLAVITMLGLFIY) traverse the membrane as a helical segment.

Belongs to the PsbJ family. As to quaternary structure, PSII is composed of 1 copy each of membrane proteins PsbA, PsbB, PsbC, PsbD, PsbE, PsbF, PsbH, PsbI, PsbJ, PsbK, PsbL, PsbM, PsbT, PsbX, PsbY, PsbZ, Psb30/Ycf12, at least 3 peripheral proteins of the oxygen-evolving complex and a large number of cofactors. It forms dimeric complexes.

The protein localises to the plastid. It is found in the chloroplast thylakoid membrane. In terms of biological role, one of the components of the core complex of photosystem II (PSII). PSII is a light-driven water:plastoquinone oxidoreductase that uses light energy to abstract electrons from H(2)O, generating O(2) and a proton gradient subsequently used for ATP formation. It consists of a core antenna complex that captures photons, and an electron transfer chain that converts photonic excitation into a charge separation. This Phaeodactylum tricornutum (strain CCAP 1055/1) protein is Photosystem II reaction center protein J.